A 306-amino-acid polypeptide reads, in one-letter code: Embryogenic cell protein 40 (306 aa).

3 disordered regions span residues 1–57 (MADL…ASHG), 80–171 (AATH…GGLG), and 188–306 (GTGI…PTSH). Residues 12 to 23 (IQLTDQHGNPVQ) show a composition bias toward polar residues. The segment covering 32–44 (VHITGVATTGATT) has biased composition (low complexity). 3 stretches are compositionally biased toward gly residues: residues 85-119 (GSHGGTGTHGVGPTGVGAAHGGTGTTTGLGTGTGT), 127-151 (GPTGIGGTHGVGSTGIGGAHGGTGV), and 159-171 (GPTGTGAAHGGLG). The span at 194 to 204 (GSAPASAGSHS) shows a compositional bias: low complexity. Composition is skewed to basic and acidic residues over residues 205–218 (HAPEKKTALGEQLH) and 243–259 (KIKEKLGGGKHKKDEHT). A compositionally biased stretch (low complexity) spans 260 to 278 (TVATTKTTTAAHPGGAAVA). The span at 279–298 (VEHHEHEKKSMLDKIKDKLP) shows a compositional bias: basic and acidic residues.

It belongs to the plant dehydrin family.

This chain is Embryogenic cell protein 40 (ECP40), found in Daucus carota (Wild carrot).